Consider the following 108-residue polypeptide: MSDTDYLTRAEAVLAAVERSVDAANDGDADIDLERNGSVLTLTFENGSKIIVNLQPPMKEVWIAAKAGGFHYRFVDGAWRDTRSGDEFFAALTGYATQQAGMPIAFSA.

Belongs to the frataxin family.

Its function is as follows. Involved in iron-sulfur (Fe-S) cluster assembly. May act as a regulator of Fe-S biogenesis. The polypeptide is Iron-sulfur cluster assembly protein CyaY (Burkholderia mallei (strain NCTC 10247)).